A 142-amino-acid polypeptide reads, in one-letter code: Large ribosomal subunit protein uL11 (142 aa).

The protein belongs to the universal ribosomal protein uL11 family. Part of the ribosomal stalk of the 50S ribosomal subunit. Interacts with L10 and the large rRNA to form the base of the stalk. L10 forms an elongated spine to which L12 dimers bind in a sequential fashion forming a multimeric L10(L12)X complex. One or more lysine residues are methylated.

Functionally, forms part of the ribosomal stalk which helps the ribosome interact with GTP-bound translation factors. The chain is Large ribosomal subunit protein uL11 from Shewanella piezotolerans (strain WP3 / JCM 13877).